The following is a 280-amino-acid chain: Virginiamycin B lyase (280 aa).

Residue H215 participates in substrate binding. E254 lines the Mg(2+) pocket. Residue H256 is the Proton acceptor of the active site. Residue E271 coordinates Mg(2+).

This sequence belongs to the Vgb family. In terms of assembly, monomer. Mg(2+) is required as a cofactor.

Inactivates the type B streptogramin antibiotics by linearizing the lactone ring at the ester linkage, generating a free phenylglycine carboxylate and converting the threonyl moiety into 2-amino-butenoic acid. The sequence is that of Virginiamycin B lyase from Mycobacterium sp. (strain JLS).